The primary structure comprises 457 residues: DNA repair protein RadA (457 aa).

The segment at 12 to 29 (CQACGYESAKWMGKCPNC) adopts a C4-type zinc-finger fold. Residue 97–104 (GDPGIGKS) participates in ATP binding. The short motif at 254–258 (KNRFG) is the RadA KNRFG motif element. A lon-protease-like region spans residues 353 to 457 (DAYLKAAGGV…GEALKKALPD (105 aa)).

Belongs to the RecA family. RadA subfamily.

Its function is as follows. DNA-dependent ATPase involved in processing of recombination intermediates, plays a role in repairing DNA breaks. Stimulates the branch migration of RecA-mediated strand transfer reactions, allowing the 3' invading strand to extend heteroduplex DNA faster. Binds ssDNA in the presence of ADP but not other nucleotides, has ATPase activity that is stimulated by ssDNA and various branched DNA structures, but inhibited by SSB. Does not have RecA's homology-searching function. In Listeria monocytogenes serovar 1/2a (strain ATCC BAA-679 / EGD-e), this protein is DNA repair protein RadA.